The chain runs to 462 residues: Hydroxymethylglutaryl-CoA synthase (462 aa).

Glu-92 acts as the Proton donor/acceptor in catalysis. Residue Cys-124 is the Acyl-thioester intermediate of the active site. Residues Cys-124, Thr-167, Ser-219, His-257, Lys-266, Asn-327, and Ser-360 each contribute to the (3S)-3-hydroxy-3-methylglutaryl-CoA site. Residue His-257 is the Proton donor/acceptor of the active site. Lys-408 is covalently cross-linked (Glycyl lysine isopeptide (Lys-Gly) (interchain with G-Cter in SUMO)).

This sequence belongs to the thiolase-like superfamily. HMG-CoA synthase family. Ubiquitinated.

The catalysed reaction is acetoacetyl-CoA + acetyl-CoA + H2O = (3S)-3-hydroxy-3-methylglutaryl-CoA + CoA + H(+). It participates in metabolic intermediate biosynthesis; (R)-mevalonate biosynthesis; (R)-mevalonate from acetyl-CoA: step 2/3. This enzyme condenses acetyl-CoA with acetoacetyl-CoA to form HMG-CoA, which is the substrate for HMG-CoA reductase. The chain is Hydroxymethylglutaryl-CoA synthase from Caenorhabditis elegans.